The chain runs to 490 residues: GTPase Der (490 aa).

2 consecutive EngA-type G domains span residues 3 to 166 (PVVA…MEDL) and 203 to 376 (IKLA…DSST). GTP is bound by residues 9–16 (GRPNVGKS), 56–60 (DTGGI), 118–121 (NKTD), 209–216 (GRPNVGKS), 256–260 (DTAGV), and 321–324 (NKWD). Residues 377–461 (RRVGTSMLTR…PIRIQFKEGE (85 aa)) form the KH-like domain.

This sequence belongs to the TRAFAC class TrmE-Era-EngA-EngB-Septin-like GTPase superfamily. EngA (Der) GTPase family. In terms of assembly, associates with the 50S ribosomal subunit.

Its function is as follows. GTPase that plays an essential role in the late steps of ribosome biogenesis. The protein is GTPase Der of Escherichia fergusonii (strain ATCC 35469 / DSM 13698 / CCUG 18766 / IAM 14443 / JCM 21226 / LMG 7866 / NBRC 102419 / NCTC 12128 / CDC 0568-73).